We begin with the raw amino-acid sequence, 298 residues long: Acetylglutamate kinase (298 aa).

Substrate is bound by residues 69 to 70 (GG), arginine 91, and asparagine 196.

The protein belongs to the acetylglutamate kinase family. ArgB subfamily.

The protein localises to the cytoplasm. It carries out the reaction N-acetyl-L-glutamate + ATP = N-acetyl-L-glutamyl 5-phosphate + ADP. Its pathway is amino-acid biosynthesis; L-arginine biosynthesis; N(2)-acetyl-L-ornithine from L-glutamate: step 2/4. Functionally, catalyzes the ATP-dependent phosphorylation of N-acetyl-L-glutamate. This chain is Acetylglutamate kinase, found in Nitrobacter winogradskyi (strain ATCC 25391 / DSM 10237 / CIP 104748 / NCIMB 11846 / Nb-255).